Consider the following 263-residue polypeptide: Urease accessory protein UreH (263 aa).

The protein belongs to the UreD family. In terms of assembly, ureH, UreF and UreG form a complex that acts as a GTP-hydrolysis-dependent molecular chaperone, activating the urease apoprotein by helping to assemble the nickel containing metallocenter of UreC. The UreE protein probably delivers the nickel.

It localises to the cytoplasm. In terms of biological role, required for maturation of urease via the functional incorporation of the urease nickel metallocenter. The polypeptide is Urease accessory protein UreH (Helicobacter acinonychis (strain Sheeba)).